A 783-amino-acid chain; its full sequence is NADH-quinone oxidoreductase subunit 3 (783 aa).

One can recognise a 2Fe-2S ferredoxin-type domain in the interval 1 to 99 (MVRVKVNDRI…GMVVDTLSDV (99 aa)). Positions 34, 45, 48, and 83 each coordinate [2Fe-2S] cluster. Positions 99-138 (VVREAQAGMVEFTLLNHPLDCPTCDKGGACELQDRTVEYG) constitute a 4Fe-4S His(Cys)3-ligated-type domain. Positions 115, 119, 122, 128, 181, 184, 187, 230, 256, 259, 263, and 291 each coordinate [4Fe-4S] cluster. Positions 249–305 (MEETPTTCALCPVGCGITADTRSGELLRIRAREVPEVNEIWICDAGRFGHEWADQNR) constitute a 4Fe-4S Mo/W bis-MGD-type domain.

It belongs to the complex I 75 kDa subunit family. NDH-1 is composed of 15 different subunits, Nqo1 to Nqo15. The complex has a L-shaped structure, with the hydrophobic arm (subunits Nqo7, Nqo8 and Nqo10 to Nqo14) embedded in the membrane and the hydrophilic peripheral arm (subunits Nqo1 to Nqo6, Nqo9 and Nqo15) protruding into the bacterial cytoplasm. The hydrophilic domain contains all the redox centers. Requires [2Fe-2S] cluster as cofactor. [4Fe-4S] cluster serves as cofactor.

The protein localises to the cell membrane. The enzyme catalyses a quinone + NADH + 5 H(+)(in) = a quinol + NAD(+) + 4 H(+)(out). NDH-1 shuttles electrons from NADH, via FMN and iron-sulfur (Fe-S) centers, to quinones in the respiratory chain. The immediate electron acceptor for the enzyme in this species is menaquinone. Couples the redox reaction to proton translocation (for every two electrons transferred, four hydrogen ions are translocated across the cytoplasmic membrane), and thus conserves the redox energy in a proton gradient required for the synthesis of ATP. This Thermus thermophilus (strain ATCC 27634 / DSM 579 / HB8) protein is NADH-quinone oxidoreductase subunit 3 (nqo3).